The primary structure comprises 320 residues: ATP-dependent 6-phosphofructokinase (320 aa).

Gly12 lines the ATP pocket. Residues 22-26 (RGVVR) and 55-60 (RYSVSD) contribute to the ADP site. Residues 73-74 (RF) and 103-106 (GDGS) each bind ATP. Residue Asp104 participates in Mg(2+) binding. Residue 126–128 (TID) coordinates substrate. The Proton acceptor role is filled by Asp128. Residue Arg155 coordinates ADP. Residues Arg163 and 170 to 172 (MGR) each bind substrate. ADP contacts are provided by residues 186 to 188 (GCE), Lys212, and 214 to 216 (KKH). Substrate contacts are provided by residues Glu223, Arg244, and 250-253 (HIQR).

This sequence belongs to the phosphofructokinase type A (PFKA) family. ATP-dependent PFK group I subfamily. Prokaryotic clade 'B1' sub-subfamily. In terms of assembly, homotetramer. The cofactor is Mg(2+).

The protein localises to the cytoplasm. The enzyme catalyses beta-D-fructose 6-phosphate + ATP = beta-D-fructose 1,6-bisphosphate + ADP + H(+). Its pathway is carbohydrate degradation; glycolysis; D-glyceraldehyde 3-phosphate and glycerone phosphate from D-glucose: step 3/4. Allosterically activated by ADP and other diphosphonucleosides, and allosterically inhibited by phosphoenolpyruvate. Functionally, catalyzes the phosphorylation of D-fructose 6-phosphate to fructose 1,6-bisphosphate by ATP, the first committing step of glycolysis. In Buchnera aphidicola subsp. Acyrthosiphon pisum (strain 5A), this protein is ATP-dependent 6-phosphofructokinase.